We begin with the raw amino-acid sequence, 150 residues long: Ribonuclease H (150 aa).

The RNase H type-1 domain occupies 1-141 (MKSIEVHTDG…VDVLARNQAT (141 aa)). Residues D9, E47, D69, and D133 each contribute to the Mg(2+) site.

It belongs to the RNase H family. In terms of assembly, monomer. Requires Mg(2+) as cofactor.

It localises to the cytoplasm. The catalysed reaction is Endonucleolytic cleavage to 5'-phosphomonoester.. In terms of biological role, endonuclease that specifically degrades the RNA of RNA-DNA hybrids. This Xanthomonas oryzae pv. oryzae (strain MAFF 311018) protein is Ribonuclease H.